The chain runs to 62 residues: Alpha-conotoxin-like S1.1 (62 aa).

The signal sequence occupies residues M1–S21. The propeptide occupies F22–N48. 2 disulfide bridges follow: C50/C56 and C51/C61. Cysteine amide is present on C61.

The protein belongs to the conotoxin A superfamily. As to expression, expressed by the venom duct.

It localises to the secreted. Alpha-conotoxins act on postsynaptic membranes, they bind to the nicotinic acetylcholine receptors (nAChR) and thus inhibit them. This is Alpha-conotoxin-like S1.1 from Conus striatus (Striated cone).